Reading from the N-terminus, the 381-residue chain is 1-deoxy-D-xylulose 5-phosphate reductoisomerase (381 aa).

Residues threonine 10, glycine 11, serine 12, isoleucine 13, glycine 36, lysine 37, asparagine 38, and asparagine 122 each contribute to the NADPH site. Residue lysine 123 participates in 1-deoxy-D-xylulose 5-phosphate binding. Glutamate 124 serves as a coordination point for NADPH. Aspartate 148 lines the Mn(2+) pocket. Residues serine 149, glutamate 150, serine 173, and histidine 196 each contribute to the 1-deoxy-D-xylulose 5-phosphate site. Glutamate 150 serves as a coordination point for Mn(2+). Glycine 202 lines the NADPH pocket. 1-deoxy-D-xylulose 5-phosphate is bound by residues serine 209, asparagine 214, lysine 215, and glutamate 218. Glutamate 218 serves as a coordination point for Mn(2+).

This sequence belongs to the DXR family. Mg(2+) is required as a cofactor. Mn(2+) serves as cofactor.

The catalysed reaction is 2-C-methyl-D-erythritol 4-phosphate + NADP(+) = 1-deoxy-D-xylulose 5-phosphate + NADPH + H(+). Its pathway is isoprenoid biosynthesis; isopentenyl diphosphate biosynthesis via DXP pathway; isopentenyl diphosphate from 1-deoxy-D-xylulose 5-phosphate: step 1/6. Catalyzes the NADPH-dependent rearrangement and reduction of 1-deoxy-D-xylulose-5-phosphate (DXP) to 2-C-methyl-D-erythritol 4-phosphate (MEP). In Desulfitobacterium hafniense (strain DSM 10664 / DCB-2), this protein is 1-deoxy-D-xylulose 5-phosphate reductoisomerase.